The sequence spans 1247 residues: SAM and SH3 domain-containing protein 1 (1247 aa).

The segment at methionine 1–glutamate 39 is disordered. The segment covering proline 13–glutamate 28 has biased composition (acidic residues). Serine 90 bears the Phosphoserine mark. 3 disordered regions span residues valine 126–glycine 145, alanine 221–lysine 257, and phenylalanine 316–tryptophan 344. The residue at position 248 (serine 248) is a Phosphoserine. Low complexity predominate over residues serine 331 to threonine 343. Serine 407 is subject to Phosphoserine. Residues serine 449–aspartate 573 are disordered. Composition is skewed to low complexity over residues lysine 468–proline 484 and glycine 505–glycine 523. Residues glutamine 524–arginine 536 are compositionally biased toward polar residues. One can recognise an SH3 domain in the interval proline 554–glutamate 615. Serine 614 is modified (phosphoserine). Disordered regions lie at residues aspartate 616–glutamate 639 and aspartate 713–asparagine 810. A compositionally biased stretch (basic residues) spans arginine 622 to arginine 631. The 65-residue stretch at proline 633–tyrosine 697 folds into the SAM 1 domain. The segment covering serine 746 to asparagine 765 has biased composition (polar residues). Phosphoserine occurs at positions 821 and 839. Disordered regions lie at residues glutamate 846–glutamine 884, proline 903–threonine 946, and aspartate 971–proline 1065. The required for interaction with TRAF6 stretch occupies residues aspartate 852–proline 860. Phosphothreonine is present on threonine 858. Residues glycine 1050 to tryptophan 1060 show a composition bias toward pro residues. Residues glycine 1177 to proline 1241 form the SAM 2 domain.

Interacts with GNAS. Interacts with IQGAP1. Interacts with TRAF6 (via C-terminus); the interaction is LPS-dependent. Interacts with MAP3K7, CHUK and IKBKB. Expressed ubiquitously, with highest levels in lung, placenta, spleen and thymus. Down-regulated in the majority (74%) of breast tumors in comparison with corresponding normal breast epithelial tissues. Expressed in the epidermis, epidermal keratinocytes, dermal fibroblasts and melanocytes.

Its subcellular location is the cytoplasm. Its function is as follows. Is a positive regulator of NF-kappa-B signaling downstream of TLR4 activation. It acts as a scaffold molecule to assemble a molecular complex that includes TRAF6, MAP3K7, CHUK and IKBKB, thereby facilitating NF-kappa-B signaling activation. Regulates TRAF6 and MAP3K7 ubiquitination. Involved in the regulation of cell mobility. Regulates lipolysaccharide (LPS)-induced endothelial cell migration. Is involved in the regulation of skin pigmentation through the control of melanocyte migration in the epidermis. The polypeptide is SAM and SH3 domain-containing protein 1 (SASH1) (Homo sapiens (Human)).